Reading from the N-terminus, the 958-residue chain is Glycine dehydrogenase (decarboxylating) (958 aa).

Lys705 is subject to N6-(pyridoxal phosphate)lysine.

The protein belongs to the GcvP family. As to quaternary structure, the glycine cleavage system is composed of four proteins: P, T, L and H. Requires pyridoxal 5'-phosphate as cofactor.

It catalyses the reaction N(6)-[(R)-lipoyl]-L-lysyl-[glycine-cleavage complex H protein] + glycine + H(+) = N(6)-[(R)-S(8)-aminomethyldihydrolipoyl]-L-lysyl-[glycine-cleavage complex H protein] + CO2. Its function is as follows. The glycine cleavage system catalyzes the degradation of glycine. The P protein binds the alpha-amino group of glycine through its pyridoxal phosphate cofactor; CO(2) is released and the remaining methylamine moiety is then transferred to the lipoamide cofactor of the H protein. The chain is Glycine dehydrogenase (decarboxylating) from Bdellovibrio bacteriovorus (strain ATCC 15356 / DSM 50701 / NCIMB 9529 / HD100).